We begin with the raw amino-acid sequence, 117 residues long: Regulator of ribonuclease activity B (117 aa).

Belongs to the RraB family. As to quaternary structure, interacts with the C-terminal region of Rne.

It is found in the cytoplasm. Its function is as follows. Globally modulates RNA abundance by binding to RNase E (Rne) and regulating its endonucleolytic activity. Can modulate Rne action in a substrate-dependent manner by altering the composition of the degradosome. This chain is Regulator of ribonuclease activity B, found in Pseudoalteromonas atlantica (strain T6c / ATCC BAA-1087).